The following is a 415-amino-acid chain: Transposase for insertion sequence element IS1081 (415 aa).

It belongs to the transposase mutator family.

Functionally, required for the transposition of the insertion element. In Mycobacterium bovis (strain ATCC BAA-935 / AF2122/97), this protein is Transposase for insertion sequence element IS1081.